The primary structure comprises 369 residues: Biotin synthase (369 aa).

The 219-residue stretch at 51 to 269 (NYVQVSTLLS…IAVARIMMPK (219 aa)) folds into the Radical SAM core domain. Residues cysteine 66, cysteine 70, and cysteine 73 each contribute to the [4Fe-4S] cluster site. Residues cysteine 110, cysteine 141, cysteine 201, and arginine 273 each contribute to the [2Fe-2S] cluster site.

Belongs to the radical SAM superfamily. Biotin synthase family. As to quaternary structure, homodimer. The cofactor is [4Fe-4S] cluster. [2Fe-2S] cluster serves as cofactor.

It catalyses the reaction (4R,5S)-dethiobiotin + (sulfur carrier)-SH + 2 reduced [2Fe-2S]-[ferredoxin] + 2 S-adenosyl-L-methionine = (sulfur carrier)-H + biotin + 2 5'-deoxyadenosine + 2 L-methionine + 2 oxidized [2Fe-2S]-[ferredoxin]. It functions in the pathway cofactor biosynthesis; biotin biosynthesis; biotin from 7,8-diaminononanoate: step 2/2. Functionally, catalyzes the conversion of dethiobiotin (DTB) to biotin by the insertion of a sulfur atom into dethiobiotin via a radical-based mechanism. The protein is Biotin synthase of Pseudoalteromonas atlantica (strain T6c / ATCC BAA-1087).